Reading from the N-terminus, the 1642-residue chain is DNA-directed RNA polymerase I subunit RPA1 (1642 aa).

Residues C66, C69, C75, and H78 each contribute to the Zn(2+) site. Residues D565, D567, and D569 each coordinate Mg(2+). The bridging helix stretch occupies residues 939–951; the sequence is PQDFFFHCMAGRE. Residues 1337 to 1428 form a disordered region; that stretch reads DADKDDDNDL…GNDNDGDDKA (92 aa). The segment covering 1340–1350 has biased composition (acidic residues); the sequence is KDDDNDLDNGD. Over residues 1351–1361 the composition is skewed to basic and acidic residues; sequence EVGRSKAKAND. Acidic residues-rich tracts occupy residues 1362 to 1373 and 1386 to 1424; these read DDSSDDNDDDDA and KDYD…DNDG. 2 positions are modified to phosphoserine: S1364 and S1365.

This sequence belongs to the RNA polymerase beta' chain family. In terms of assembly, component of the RNA polymerase I (Pol I) complex consisting of at least 13 subunits. Post-translationally, phosphorylated.

It is found in the nucleus. Its subcellular location is the nucleolus. It catalyses the reaction RNA(n) + a ribonucleoside 5'-triphosphate = RNA(n+1) + diphosphate. Its function is as follows. DNA-dependent RNA polymerase catalyzes the transcription of DNA into RNA using the four ribonucleoside triphosphates as substrates. Largest and catalytic core component of RNA polymerase I which synthesizes ribosomal RNA precursors. Forms the polymerase active center together with the second largest subunit. A single stranded DNA template strand of the promoter is positioned within the central active site cleft of Pol I. A bridging helix emanates from RPA1 and crosses the cleft near the catalytic site and is thought to promote translocation of Pol I by acting as a ratchet that moves the RNA-DNA hybrid through the active site by switching from straight to bent conformations at each step of nucleotide addition. The chain is DNA-directed RNA polymerase I subunit RPA1 (RpI1) from Drosophila melanogaster (Fruit fly).